The chain runs to 350 residues: GDSL esterase/lipase At4g10955 (350 aa).

This sequence belongs to the 'GDSL' lipolytic enzyme family.

This Arabidopsis thaliana (Mouse-ear cress) protein is GDSL esterase/lipase At4g10955.